Here is a 692-residue protein sequence, read N- to C-terminus: Elongation factor G (692 aa).

In terms of domain architecture, tr-type G spans A8–L282. Residues A17–T24, D81–H85, and N135–D138 contribute to the GTP site.

Belongs to the TRAFAC class translation factor GTPase superfamily. Classic translation factor GTPase family. EF-G/EF-2 subfamily.

It localises to the cytoplasm. Catalyzes the GTP-dependent ribosomal translocation step during translation elongation. During this step, the ribosome changes from the pre-translocational (PRE) to the post-translocational (POST) state as the newly formed A-site-bound peptidyl-tRNA and P-site-bound deacylated tRNA move to the P and E sites, respectively. Catalyzes the coordinated movement of the two tRNA molecules, the mRNA and conformational changes in the ribosome. This is Elongation factor G from Streptococcus equi subsp. equi (strain 4047).